We begin with the raw amino-acid sequence, 631 residues long: tRNA uridine 5-carboxymethylaminomethyl modification enzyme MnmG (631 aa).

15-20 (GAGHAG) provides a ligand contact to FAD. The segment at 203–232 (TPPRVDGNTVDYSKTQEEPGDKEPRHFSYT) is disordered. Positions 216-232 (KTQEEPGDKEPRHFSYT) are enriched in basic and acidic residues. 276–290 (GPRYCPSIEDKVVRF) contributes to the NAD(+) binding site.

This sequence belongs to the MnmG family. In terms of assembly, homodimer. Heterotetramer of two MnmE and two MnmG subunits. The cofactor is FAD.

The protein resides in the cytoplasm. In terms of biological role, NAD-binding protein involved in the addition of a carboxymethylaminomethyl (cmnm) group at the wobble position (U34) of certain tRNAs, forming tRNA-cmnm(5)s(2)U34. This chain is tRNA uridine 5-carboxymethylaminomethyl modification enzyme MnmG, found in Lactobacillus gasseri (strain ATCC 33323 / DSM 20243 / BCRC 14619 / CIP 102991 / JCM 1131 / KCTC 3163 / NCIMB 11718 / NCTC 13722 / AM63).